A 487-amino-acid polypeptide reads, in one-letter code: Catalase (487 aa).

A disordered region spans residues 1 to 20 (MSQRVLTTESGAPVADNQNS). Active-site residues include histidine 54 and asparagine 127. Tyrosine 337 serves as a coordination point for heme.

It belongs to the catalase family. Heme is required as a cofactor.

The catalysed reaction is 2 H2O2 = O2 + 2 H2O. Functionally, decomposes hydrogen peroxide into water and oxygen; serves to protect cells from the toxic effects of hydrogen peroxide. The polypeptide is Catalase (katA) (Streptomyces coelicolor (strain ATCC BAA-471 / A3(2) / M145)).